The sequence spans 309 residues: Ribosomal RNA small subunit methyltransferase H (309 aa).

S-adenosyl-L-methionine contacts are provided by residues 36–38 (GGH), Asp56, Phe82, Asp103, and Gln110.

It belongs to the methyltransferase superfamily. RsmH family.

The protein resides in the cytoplasm. It catalyses the reaction cytidine(1402) in 16S rRNA + S-adenosyl-L-methionine = N(4)-methylcytidine(1402) in 16S rRNA + S-adenosyl-L-homocysteine + H(+). Specifically methylates the N4 position of cytidine in position 1402 (C1402) of 16S rRNA. This chain is Ribosomal RNA small subunit methyltransferase H, found in Hahella chejuensis (strain KCTC 2396).